Consider the following 101-residue polypeptide: Co-chaperonin GroES (101 aa).

Belongs to the GroES chaperonin family. As to quaternary structure, heptamer of 7 subunits arranged in a ring. Interacts with the chaperonin GroEL.

It localises to the cytoplasm. Its function is as follows. Together with the chaperonin GroEL, plays an essential role in assisting protein folding. The GroEL-GroES system forms a nano-cage that allows encapsulation of the non-native substrate proteins and provides a physical environment optimized to promote and accelerate protein folding. GroES binds to the apical surface of the GroEL ring, thereby capping the opening of the GroEL channel. This is Co-chaperonin GroES from Thermus thermophilus (strain ATCC BAA-163 / DSM 7039 / HB27).